The primary structure comprises 386 residues: Synaptotagmin-5 (386 aa).

The segment covering Met-1–Pro-16 has biased composition (pro residues). The tract at residues Met-1–Arg-21 is disordered. The Vesicular segment spans residues Met-1–Gln-24. Residues Gly-25 to Ser-45 form a helical membrane-spanning segment. Topologically, residues Ser-46–Pro-386 are cytoplasmic. 2 C2 domains span residues Gln-108 to Arg-227 and Lys-239 to His-372. Positions 138, 139, 145, 197, 198, 199, 202, 205, 270, 276, 330, and 332 each coordinate Ca(2+).

Belongs to the synaptotagmin family. In terms of assembly, homodimer. Interacts with both alpha- and beta-tubulin. The cofactor is Ca(2+).

It localises to the cytoplasmic vesicle. It is found in the secretory vesicle. Its subcellular location is the synaptic vesicle membrane. The protein resides in the recycling endosome membrane. In terms of biological role, may be involved in Ca(2+)-dependent exocytosis of secretory vesicles through Ca(2+) and phospholipid binding to the C2 domain or may serve as Ca(2+) sensors in the process of vesicular trafficking and exocytosis. Regulates the Ca(2+)-dependent secretion of norepinephrine in PC12 cells. Required for export from the endocytic recycling compartment to the cell surface. In Mus musculus (Mouse), this protein is Synaptotagmin-5 (Syt5).